The sequence spans 146 residues: Hemoglobin subunit beta (146 aa).

An N-acetylvaline modification is found at valine 1. Residues 2–146 enclose the Globin domain; that stretch reads HLSAEEKAAV…VANALAHKYH (145 aa). Threonine 12 carries the phosphothreonine modification. A Phosphoserine modification is found at serine 44. The residue at position 59 (lysine 59) is an N6-acetyllysine. Histidine 63 serves as a coordination point for heme b. Lysine 82 is modified (N6-acetyllysine). Histidine 92 contributes to the heme b binding site. S-nitrosocysteine is present on cysteine 93. An N6-acetyllysine modification is found at lysine 144.

This sequence belongs to the globin family. As to quaternary structure, heterotetramer of two alpha chains and two beta chains. As to expression, red blood cells.

Functionally, involved in oxygen transport from the lung to the various peripheral tissues. The sequence is that of Hemoglobin subunit beta (HBB) from Ctenodactylus gundi (Northern gundi).